The primary structure comprises 633 residues: tRNA uridine 5-carboxymethylaminomethyl modification enzyme MnmG (633 aa).

FAD contacts are provided by residues 15-20 (GAGHAG), Ile-127, and Ser-182. 276-290 (GPRYCPSIEDKIVRF) lines the NAD(+) pocket. Residue Gln-373 participates in FAD binding.

The protein belongs to the MnmG family. As to quaternary structure, homodimer. Heterotetramer of two MnmE and two MnmG subunits. Requires FAD as cofactor.

It localises to the cytoplasm. Functionally, NAD-binding protein involved in the addition of a carboxymethylaminomethyl (cmnm) group at the wobble position (U34) of certain tRNAs, forming tRNA-cmnm(5)s(2)U34. The protein is tRNA uridine 5-carboxymethylaminomethyl modification enzyme MnmG of Streptococcus agalactiae serotype Ia (strain ATCC 27591 / A909 / CDC SS700).